Here is a 152-residue protein sequence, read N- to C-terminus: MSEKYVVTWDMFHMHARKLAERLLPASQWKGIIAVSRGGLFPAAVLARELGLRHVETVCIASYDHDQQGDLKVIHKAETDGEGFIVVDDLVDTGNTAREIRNMYPKAKFVTVFAKPAGAPLVDDYVIDIPQNTWIEQPWDLGIGFVPPLARK.

5-phospho-alpha-D-ribose 1-diphosphate is bound by residues 37-38 and 88-96; these read RG and DDLVDTGNT. Residue D89 participates in Mg(2+) binding. Residues D92 and I135 each contribute to the guanine site. Positions 92 and 135 each coordinate xanthine. GMP is bound by residues 92–96 and 134–135; these read DTGNT and WI.

The protein belongs to the purine/pyrimidine phosphoribosyltransferase family. XGPT subfamily. In terms of assembly, homotetramer. The cofactor is Mg(2+).

The protein resides in the cell inner membrane. The enzyme catalyses GMP + diphosphate = guanine + 5-phospho-alpha-D-ribose 1-diphosphate. It carries out the reaction XMP + diphosphate = xanthine + 5-phospho-alpha-D-ribose 1-diphosphate. The catalysed reaction is IMP + diphosphate = hypoxanthine + 5-phospho-alpha-D-ribose 1-diphosphate. It functions in the pathway purine metabolism; GMP biosynthesis via salvage pathway; GMP from guanine: step 1/1. The protein operates within purine metabolism; XMP biosynthesis via salvage pathway; XMP from xanthine: step 1/1. Functionally, purine salvage pathway enzyme that catalyzes the transfer of the ribosyl-5-phosphate group from 5-phospho-alpha-D-ribose 1-diphosphate (PRPP) to the N9 position of the 6-oxopurines guanine and xanthine to form the corresponding ribonucleotides GMP (guanosine 5'-monophosphate) and XMP (xanthosine 5'-monophosphate), with the release of PPi. To a lesser extent, also acts on hypoxanthine. The chain is Xanthine-guanine phosphoribosyltransferase from Mannheimia succiniciproducens (strain KCTC 0769BP / MBEL55E).